A 339-amino-acid chain; its full sequence is N-acetyl-gamma-glutamyl-phosphate reductase (339 aa).

Residue Cys145 is part of the active site.

Belongs to the NAGSA dehydrogenase family. Type 1 subfamily.

The protein localises to the cytoplasm. The catalysed reaction is N-acetyl-L-glutamate 5-semialdehyde + phosphate + NADP(+) = N-acetyl-L-glutamyl 5-phosphate + NADPH + H(+). It participates in amino-acid biosynthesis; L-arginine biosynthesis; N(2)-acetyl-L-ornithine from L-glutamate: step 3/4. Catalyzes the NADPH-dependent reduction of N-acetyl-5-glutamyl phosphate to yield N-acetyl-L-glutamate 5-semialdehyde. The chain is N-acetyl-gamma-glutamyl-phosphate reductase from Kosmotoga olearia (strain ATCC BAA-1733 / DSM 21960 / TBF 19.5.1).